A 354-amino-acid polypeptide reads, in one-letter code: Guanine nucleotide-binding protein G(i) subunit alpha-3 (354 aa).

Gly2 is lipidated: N-myristoyl glycine. The S-palmitoyl cysteine moiety is linked to residue Cys3. The G-alpha domain maps to 32-354 (KEVKLLLLGA…KNNLKECGLY (323 aa)). The G1 motif stretch occupies residues 35-48 (KLLLLGAGESGKST). Gly42, Glu43, Ser44, Gly45, Lys46, Ser47, Thr48, Asp150, Ser151, Leu175, Arg176, Thr177, Arg178, Val179, Lys180, Thr181, Val201, Gly203, Asn269, Lys270, Asp272, Leu273, Cys325, Ala326, and Thr327 together coordinate GTP. Ser47 is a binding site for Mg(2+). The tract at residues 173-181 (DVLRTRVKT) is G2 motif. Mg(2+) is bound at residue Thr181. The segment at 196–205 (FKMFDVGGQR) is G3 motif. Residues 265–272 (ILFLNKKD) are G4 motif. The segment at 324–329 (TCATDT) is G5 motif.

Belongs to the G-alpha family. G(i/o/t/z) subfamily. As to quaternary structure, heterotrimeric G proteins are composed of 3 units; alpha, beta and gamma. The alpha subunit contains the guanine nucleotide binding site. GTP binding causes dissociation of the heterotrimer, liberating the individual subunits so that they can interact with downstream effector proteins. Forms a complex with CCDC88A/GIV and EGFR which leads to enhanced EGFR signaling and triggering of cell migration; ligand stimulation is required for recruitment of GNAI3 to the complex. Interacts (inactive GDP-bound form) with CCDC88A/GIV (via GBA motif); the interaction leads to activation of GNAI3. Interacts (inactive GDP-bound form) with CCDC88C/DAPLE (via GBA motif); the interaction leads to activation of GNAI3. Interacts (inactive GDP-bound form) with NUCB1 (via GBA motif) and NUCB2 (via GBA motif); the interaction leads to activation of GNAI3. Interacts (inactive GDP-bound form) with PLCD4 (via GBA motif); the interaction leads to activation of GNAI3. Interacts with INSR; the interaction is probably mediated by CCDC88A/GIV. Interacts with GPSM1. Interacts (GDP-bound form) with GPSM2 (via GoLoco domains). Does not interact with RGS2. Interacts with RGS8 and RGS10; this strongly enhances the intrinsic GTPase activity. Interacts with RGS16; this strongly enhances the intrinsic GTPase activity. Interacts with RGS12. Interacts (via active GTP- or inactive GDP-bound form) with RGS14. Interacts (via active GTP-bound form) with TRPC5 (via ANK repeats) in a homotetrameric ion channel; the interaction is direct and activates the channel activity. In terms of tissue distribution, ubiquitously expressed.

It is found in the cytoplasm. The protein resides in the cell membrane. The protein localises to the cytoskeleton. Its subcellular location is the microtubule organizing center. It localises to the centrosome. In terms of biological role, heterotrimeric guanine nucleotide-binding proteins (G proteins) function as transducers downstream of G protein-coupled receptors (GPCRs) in numerous signaling cascades. The alpha chain contains the guanine nucleotide binding site and alternates between an active, GTP-bound state and an inactive, GDP-bound state. Signaling by an activated GPCR promotes GDP release and GTP binding. The alpha subunit has a low GTPase activity that converts bound GTP to GDP, thereby terminating the signal. Both GDP release and GTP hydrolysis are modulated by numerous regulatory proteins. Signaling is mediated via effector proteins, such as adenylate cyclase. Inhibits adenylate cyclase activity, leading to decreased intracellular cAMP levels. Stimulates the activity of receptor-regulated K(+) channels. The active GTP-bound form prevents the association of RGS14 with centrosomes and is required for the translocation of RGS14 from the cytoplasm to the plasma membrane. May play a role in cell division. The active GTP-bound form activates the calcium permeant TRPC5 ion channels. In Cavia porcellus (Guinea pig), this protein is Guanine nucleotide-binding protein G(i) subunit alpha-3 (GNAI3).